Here is a 173-residue protein sequence, read N- to C-terminus: Crossover junction endodeoxyribonuclease RuvC (173 aa).

Residues Asp-10, Glu-71, and Asp-143 contribute to the active site. Residues Asp-10, Glu-71, and Asp-143 each coordinate Mg(2+).

Belongs to the RuvC family. In terms of assembly, homodimer which binds Holliday junction (HJ) DNA. The HJ becomes 2-fold symmetrical on binding to RuvC with unstacked arms; it has a different conformation from HJ DNA in complex with RuvA. In the full resolvosome a probable DNA-RuvA(4)-RuvB(12)-RuvC(2) complex forms which resolves the HJ. The cofactor is Mg(2+).

It is found in the cytoplasm. The enzyme catalyses Endonucleolytic cleavage at a junction such as a reciprocal single-stranded crossover between two homologous DNA duplexes (Holliday junction).. Functionally, the RuvA-RuvB-RuvC complex processes Holliday junction (HJ) DNA during genetic recombination and DNA repair. Endonuclease that resolves HJ intermediates. Cleaves cruciform DNA by making single-stranded nicks across the HJ at symmetrical positions within the homologous arms, yielding a 5'-phosphate and a 3'-hydroxyl group; requires a central core of homology in the junction. The consensus cleavage sequence is 5'-(A/T)TT(C/G)-3'. Cleavage occurs on the 3'-side of the TT dinucleotide at the point of strand exchange. HJ branch migration catalyzed by RuvA-RuvB allows RuvC to scan DNA until it finds its consensus sequence, where it cleaves and resolves the cruciform DNA. This chain is Crossover junction endodeoxyribonuclease RuvC, found in Gloeobacter violaceus (strain ATCC 29082 / PCC 7421).